The sequence spans 381 residues: Neuropeptide Y receptor type 2 (381 aa).

Positions 1–37 are disordered; the sequence is MGPIGTEADENQTVEEIKVEPYGPGHTTPRGELAPDP. At 1 to 52 the chain is on the extracellular side; sequence MGPIGTEADENQTVEEIKVEPYGPGHTTPRGELAPDPEPELIDSTKLTEVRV. The N-linked (GlcNAc...) asparagine glycan is linked to asparagine 11. The chain crosses the membrane as a helical span at residues 53-73; the sequence is VLILAYCSIILLGVVGNSLVI. At 74–87 the chain is on the cytoplasmic side; it reads HVVIKFKSMRTVTN. The helical transmembrane segment at 88–108 threads the bilayer; that stretch reads FFIANLAVADLLVNTLCLPFT. The Extracellular segment spans residues 109–125; the sequence is LTYTLMGEWKMGPVLCH. Cysteines 124 and 204 form a disulfide. Residues 126–146 form a helical membrane-spanning segment; it reads LVPYAQGLAVQVSTVTLTVIA. Residues 147-166 lie on the Cytoplasmic side of the membrane; that stretch reads LDRHRCIVYHLDSKISKQNS. A helical transmembrane segment spans residues 167 to 187; that stretch reads FLIIGLAWGISALLASPLAIF. The Extracellular portion of the chain corresponds to 188-217; that stretch reads REYSLIEIIPDFEIVACTEKWPGEEKSIYG. The chain crosses the membrane as a helical span at residues 218–238; that stretch reads TVYSLSSLLILYVLPLGIISV. Residues 239 to 269 are Cytoplasmic-facing; it reads SYVRIWSKLKNHVSPGAANDHYHQRRQKTTK. A helical transmembrane segment spans residues 270–290; it reads MLVFVVVVFAVSWLPLHAFQL. At 291–305 the chain is on the extracellular side; sequence AVDIDSQVLDLKEYK. A helical transmembrane segment spans residues 306-326; the sequence is LIFTVFHIIAMCSTFANPLLY. Over 327 to 381 the chain is Cytoplasmic; the sequence is GWMNSNYRKAFLSAFRCQQRLDAIQSEVCVTGKAKTNVEVEKNHGAADSAEATNV. Cysteine 343 carries the S-palmitoyl cysteine lipid modification.

Belongs to the G-protein coupled receptor 1 family.

It localises to the cell membrane. Functionally, receptor for neuropeptide Y and peptide YY. The sequence is that of Neuropeptide Y receptor type 2 (NPY2R) from Cavia porcellus (Guinea pig).